Here is a 430-residue protein sequence, read N- to C-terminus: MSVLIRGVRPYGEGERVDVLVDDGQIAQIGPDLAIPDTADVIDATGHVLLPGFVDLHTHLREPGREYAEDIETGSAAAALGGYTAVFAMANTNPVADSPVVTDHVWHRGQQVGLVDVHPVGAVTVGLAGAELTEMGMMNAGAAQVRMFSDDGVCVHDPLIMRRALEYATGLGVLIAQHAEEPRLTVGAFAHEGPMAARLGLAGWPRAAEESIVARDALLARDAGARVHICHASAAGTVEILKWAKDQGISITAEVTPHHLLLDDARLASYDGVNRVNPPLREASDAVALRQALADGIIDCVATDHAPHAEHEKCVEFAAARPGMLGLQTALSVVVQTMVAPGLLSWRDIARVMSENPACIARLPDQGRPLEVGEPANLTVVDPDATWTVTGADLASRSANTPFESMSLPATVTATLLRGKVTARDGKIRA.

Residues His-57 and His-59 each coordinate Zn(2+). Residues 59–61 and Asn-91 contribute to the substrate site; that span reads HLR. Asp-151, His-178, and His-231 together coordinate Zn(2+). Asn-277 contacts substrate. Asp-304 is a Zn(2+) binding site. Residue Asp-304 is part of the active site. Residues His-308 and 322–323 each bind substrate; that span reads PG.

It belongs to the metallo-dependent hydrolases superfamily. DHOase family. Class I DHOase subfamily. Zn(2+) serves as cofactor.

It catalyses the reaction (S)-dihydroorotate + H2O = N-carbamoyl-L-aspartate + H(+). The protein operates within pyrimidine metabolism; UMP biosynthesis via de novo pathway; (S)-dihydroorotate from bicarbonate: step 3/3. Its function is as follows. Catalyzes the reversible cyclization of carbamoyl aspartate to dihydroorotate. In Mycobacterium bovis (strain ATCC BAA-935 / AF2122/97), this protein is Dihydroorotase.